Consider the following 102-residue polypeptide: MKIKNGDTVIVISGKDKGKTGNVIEVLAKKNKVVVEGVNIVTKHQKANGRGVESGLIKKEAPIDVSNVMYYDAKNKKGTRLGYKFEDGKKVRFMKSNNETIK.

This sequence belongs to the universal ribosomal protein uL24 family. Part of the 50S ribosomal subunit.

Functionally, one of two assembly initiator proteins, it binds directly to the 5'-end of the 23S rRNA, where it nucleates assembly of the 50S subunit. In terms of biological role, one of the proteins that surrounds the polypeptide exit tunnel on the outside of the subunit. In Finegoldia magna (strain ATCC 29328 / DSM 20472 / WAL 2508) (Peptostreptococcus magnus), this protein is Large ribosomal subunit protein uL24.